A 147-amino-acid polypeptide reads, in one-letter code: UPF0208 membrane protein SO_2914 (147 aa).

Helical transmembrane passes span 40–60 (LAIL…LYTY) and 68–88 (ALTI…WLGW).

The protein belongs to the UPF0208 family.

Its subcellular location is the cell inner membrane. In Shewanella oneidensis (strain ATCC 700550 / JCM 31522 / CIP 106686 / LMG 19005 / NCIMB 14063 / MR-1), this protein is UPF0208 membrane protein SO_2914.